The primary structure comprises 441 residues: Zinc finger protein ZIC 3 (441 aa).

Residues L222–H257 form a C2H2-type 1; atypical zinc finger. Residues H266–H293 form a C2H2-type 2; atypical zinc finger. 3 C2H2-type zinc fingers span residues F299–H323, F329–H353, and Y359–H381. The segment at R375–V441 is disordered. Positions S383 to A399 are enriched in low complexity. Positions S406–T429 are enriched in polar residues.

Belongs to the GLI C2H2-type zinc-finger protein family. First detected at early gastrula (stage 10.25) in the dorsal lip and prospective neural plate. Also expressed in the mesoderm at early gastrulation, with expression strongest on the dorsal side. Mesodermal expression continues at stage 12 but is hardly detectable after stage 14. As gastrulation proceeds, expression decreases in the dorsal lip and increases in the prospective neural plate. At the neural plate stage (stage 14), expressed strongly in the prospective mesencephalon and anterior rhombencephalon, after which expression becomes stronger in the anterior neural folds. At early tailbud stage (stage 20), expression becomes restricted to the dorsal region of forebrain, midbrain and hindbrain, and weakly to the dorsal trunk. After mid-tailbud stage, expression decreases in the diencephalon, appears in the lateral mesoderm of the tailbud region and becomes restricted in the dorsal part of the neural tube.

It localises to the nucleus. The protein resides in the cytoplasm. Its function is as follows. Probably acts as a transcriptional activator. May bind to the minimal GLI-consensus sequence 5'-GGGTGGTC-3'. Can determine the ectodermal cell fate and promote the earliest step of neural and neural crest development. Involved in establishing left-right asymmetry in the embryo. This Xenopus laevis (African clawed frog) protein is Zinc finger protein ZIC 3 (zic3).